Here is a 170-residue protein sequence, read N- to C-terminus: MTLLSQNELRELVLANPPLVENMIDMDTQLQPNGVEMTLKEIRTIKSPGAVDFDNSGRRLSEGDTIEFNEDGWIHLDPGVYKVLLNEIVNIPKDLAAIAKPRSTLIRCGATLETAVWDAGYSGRSECMIVVHNKDGFDLKKDARIMQLLFYHLHTEVEEGYSGSYQNENI.

The protein belongs to the dCTP deaminase family. Archaeal dUTPase subfamily.

The catalysed reaction is dUTP + H2O = dUMP + diphosphate + H(+). It participates in pyrimidine metabolism; dUMP biosynthesis; dUMP from dCTP (dUTP route): step 2/2. Its function is as follows. This enzyme is involved in nucleotide metabolism: it produces dUMP, the immediate precursor of thymidine nucleotides and it decreases the intracellular concentration of dUTP so that uracil cannot be incorporated into DNA. The protein is Probable deoxyuridine 5'-triphosphate nucleotidohydrolase of Methanococcoides burtonii (strain DSM 6242 / NBRC 107633 / OCM 468 / ACE-M).